A 348-amino-acid chain; its full sequence is Ion-translocating oxidoreductase complex subunit D (348 aa).

A run of 3 helical transmembrane segments spans residues 25-45, 68-88, and 124-144; these read ILAA…GTFI, PISP…IGVA, and AMAA…TWAA. Residue Thr182 is modified to FMN phosphoryl threonine. A run of 5 helical transmembrane segments spans residues 211–231, 237–257, 263–283, 296–316, and 317–337; these read TGEG…FLLA, WHIS…GFGA, ASPL…FIAT, LLFG…GGYP, and DGVA…DYYI.

This sequence belongs to the NqrB/RnfD family. The complex is composed of six subunits: RnfA, RnfB, RnfC, RnfD, RnfE and RnfG. FMN is required as a cofactor.

It localises to the cell inner membrane. In terms of biological role, part of a membrane-bound complex that couples electron transfer with translocation of ions across the membrane. This is Ion-translocating oxidoreductase complex subunit D from Shewanella amazonensis (strain ATCC BAA-1098 / SB2B).